The sequence spans 60 residues: Large ribosomal subunit protein uL30 (60 aa).

The protein belongs to the universal ribosomal protein uL30 family. Part of the 50S ribosomal subunit.

The polypeptide is Large ribosomal subunit protein uL30 (Thermus thermophilus (strain ATCC BAA-163 / DSM 7039 / HB27)).